The following is a 517-amino-acid chain: 2-isopropylmalate synthase (517 aa).

Positions 5-268 constitute a Pyruvate carboxyltransferase domain; it reads IIIFDTTLRD…DTRINTQEIH (264 aa). Mn(2+) is bound by residues Asp14, His202, His204, and Asn238. A regulatory domain region spans residues 393–517; sequence SLDVITSQTI…ADLKSHKISQ (125 aa).

Belongs to the alpha-IPM synthase/homocitrate synthase family. LeuA type 1 subfamily. Homodimer. Mn(2+) serves as cofactor.

It localises to the cytoplasm. The enzyme catalyses 3-methyl-2-oxobutanoate + acetyl-CoA + H2O = (2S)-2-isopropylmalate + CoA + H(+). Its pathway is amino-acid biosynthesis; L-leucine biosynthesis; L-leucine from 3-methyl-2-oxobutanoate: step 1/4. Its function is as follows. Catalyzes the condensation of the acetyl group of acetyl-CoA with 3-methyl-2-oxobutanoate (2-ketoisovalerate) to form 3-carboxy-3-hydroxy-4-methylpentanoate (2-isopropylmalate). The sequence is that of 2-isopropylmalate synthase from Histophilus somni (strain 129Pt) (Haemophilus somnus).